The sequence spans 418 residues: Nisin biosynthesis protein NisC (418 aa).

The protein to B.subtilis SpaC and S.epidermidis EpiC.

In terms of biological role, could be implicated in the processing or the export process of the nisin lantibiotic. The polypeptide is Nisin biosynthesis protein NisC (nisC) (Lactococcus lactis subsp. lactis (Streptococcus lactis)).